The chain runs to 97 residues: Antitoxin TacA2 (97 aa).

It belongs to the TacA antitoxin family. Homodimer. Forms a complex with cognate toxin TacT2.

In terms of biological role, antitoxin component of a type II toxin-antitoxin (TA) system. Counteracts the toxic effect of cognate toxin TacT2. Its function is as follows. The TacA2-TacT2 complex both represses and derepresses expression of its own operon. This chain is Antitoxin TacA2, found in Salmonella enteritidis.